The following is a 348-amino-acid chain: Dihydroorotase (348 aa).

Zn(2+) is bound by residues histidine 17 and histidine 19. Substrate contacts are provided by residues 19–21 (HLR) and asparagine 45. Lysine 103, histidine 140, and histidine 178 together coordinate Zn(2+). Lysine 103 bears the N6-carboxylysine mark. Histidine 140 is a substrate binding site. Substrate is bound at residue leucine 223. Residue aspartate 251 participates in Zn(2+) binding. The active site involves aspartate 251. Substrate-binding residues include histidine 255 and alanine 267.

This sequence belongs to the metallo-dependent hydrolases superfamily. DHOase family. Class II DHOase subfamily. Homodimer. Zn(2+) serves as cofactor.

The catalysed reaction is (S)-dihydroorotate + H2O = N-carbamoyl-L-aspartate + H(+). Its pathway is pyrimidine metabolism; UMP biosynthesis via de novo pathway; (S)-dihydroorotate from bicarbonate: step 3/3. Catalyzes the reversible cyclization of carbamoyl aspartate to dihydroorotate. The sequence is that of Dihydroorotase from Cronobacter sakazakii (strain ATCC BAA-894) (Enterobacter sakazakii).